We begin with the raw amino-acid sequence, 144 residues long: Ribosomal RNA large subunit methyltransferase H (144 aa).

S-adenosyl-L-methionine contacts are provided by residues Gly-92 and 111–116; that span reads LSPMTF.

Belongs to the RNA methyltransferase RlmH family. Homodimer.

The protein resides in the cytoplasm. It catalyses the reaction pseudouridine(1915) in 23S rRNA + S-adenosyl-L-methionine = N(3)-methylpseudouridine(1915) in 23S rRNA + S-adenosyl-L-homocysteine + H(+). Specifically methylates the pseudouridine at position 1915 (m3Psi1915) in 23S rRNA. In Synechococcus sp. (strain CC9311), this protein is Ribosomal RNA large subunit methyltransferase H.